A 519-amino-acid polypeptide reads, in one-letter code: Maturase K (519 aa).

This sequence belongs to the intron maturase 2 family. MatK subfamily.

Its subcellular location is the plastid. The protein localises to the chloroplast. Usually encoded in the trnK tRNA gene intron. Probably assists in splicing its own and other chloroplast group II introns. The sequence is that of Maturase K from Dioscorea elephantipes (Elephant's foot yam).